The primary structure comprises 1185 residues: Zinc finger SWIM domain-containing protein 5 (1185 aa).

The span at 1 to 10 (MADGGEREEL) shows a compositional bias: basic and acidic residues. 2 disordered regions span residues 1–45 (MADG…GGAG) and 123–153 (AGAAGGAAGASPAEEGPQPPPGAAAPAGSAP). The SWIM-type zinc finger occupies 219 to 256 (YKVAISFDRCKITSVTCGCGNKDIFYCAHVVALSLYRI).

The polypeptide is Zinc finger SWIM domain-containing protein 5 (ZSWIM5) (Homo sapiens (Human)).